The following is a 397-amino-acid chain: Metallophosphoesterase 1 (397 aa).

A helical transmembrane segment spans residues 27–47 (IAVVFAVLLFCEFLIYYLAIF). 6 residues coordinate a divalent metal cation: aspartate 77, aspartate 119, asparagine 157, histidine 250, histidine 304, and histidine 306. Residues 357–377 (VVLIIYCGMVGFLVVLTLTHF) form a helical membrane-spanning segment. A Di-lysine motif motif is present at residues 393–397 (KRKTR).

This sequence belongs to the metallophosphoesterase superfamily. MPPE1 family. As to quaternary structure, interacts with GPI-anchor proteins (via the GPI portion). Interacts with TMED10. The cofactor is Mn(2+).

Its subcellular location is the endoplasmic reticulum-Golgi intermediate compartment membrane. Metallophosphoesterase that catalyzes the removal of a side-chain ethanolamine-phosphate (EtNP) from the second mannose of the GPI-anchor protein intermediate. Participates in the glycan remodeling steps of GPI-anchor maturation to allow an efficient transport of GPI-anchor proteins from the endoplasmic reticulum to the Golgi. This Pongo abelii (Sumatran orangutan) protein is Metallophosphoesterase 1.